The primary structure comprises 313 residues: Transcription factor MafB (313 aa).

Disordered regions lie at residues 51–77 and 151–197; these read QPTG…FSPT and MGLP…VEDR. Residues 55 to 76 show a composition bias toward low complexity; that stretch reads SVSSTPISTPCSSVPSSPSFSP. Positions 154–166 are enriched in basic residues; it reads PHHHPHHHQHQHH. Low complexity predominate over residues 167–192; it reads QTSPSPSGSSSSSQQLHHQQQHSSSS. The segment at 225 to 250 is basic motif; that stretch reads RLKQKRRTLKNRGYAQSCRYKRVQQK. Positions 225 to 288 constitute a bZIP domain; the sequence is RLKQKRRTLK…DAYKIKCEKL (64 aa). The leucine-zipper stretch occupies residues 253–274; sequence LEGEKTQLVQQVEQLKQEVSRL. Residues 292-313 are disordered; sequence NSSNFREAGSTSDNPSSPEFFM.

It belongs to the bZIP family. Maf subfamily. Homodimer or heterodimer with other bHLH-Zip transcription factors. Binds DNA as a homodimer or a heterodimer.

It is found in the nucleus. Acts as a transcriptional activator or repressor. Implicated in the regulation of cell-type specific gene expression and play a role in inductive events during lens development. This chain is Transcription factor MafB (mafb), found in Xenopus laevis (African clawed frog).